The following is a 178-amino-acid chain: Translation initiation factor IF-3 (178 aa).

The protein belongs to the IF-3 family. Monomer.

The protein localises to the cytoplasm. Functionally, IF-3 binds to the 30S ribosomal subunit and shifts the equilibrium between 70S ribosomes and their 50S and 30S subunits in favor of the free subunits, thus enhancing the availability of 30S subunits on which protein synthesis initiation begins. The protein is Translation initiation factor IF-3 of Ureaplasma parvum serovar 3 (strain ATCC 700970).